The sequence spans 693 residues: MARKIPLNRIRNIGIAAHIDAGKTTTTERILFYTGVSHKVGEVHDGAATMDWMEQEKERGITITSAATTCFWKDYQVNIIDTPGHVDFTIEVERSMRVLDGAVAVFCSVGGVQPQSETVWRQANKYGVPRMVFVNKMDRIGANFYNVESQISDRLKARPVPVVIPVGAEDTFKGVIDLLQMKALIWNDETMGAKYDIEEIPADLVEKANEYREKMIEAAAEQDEALMEKYLNGEELTTEEIKRGLKIGCHAMAIIPMLCGSSFKNKGVQTLLDAVIDYLPAPTEVADIHGVDAKDETKEISVQSSDEGEFAGLAFKIMTDPFVGQLTFVRVYRGSLESGSYVYNSTKGKKERVGRLLKMHANKREDIKEIYAGEICAFVGLKETLTGDTLCSEKEPVILERMEFPEPVISIAVEPKTKADQEKMGIALNKLAEEDPSFRVNSDEETGQTIISGMGELHLEIIVDRMKREFKVEAEVGQPQVAFRETVRKAVNKECKYAKQSGGRGQYGHVFIKLEPQEAGKGYEFVNDISGGVIPKEYIPAVDKGIKEAMQSGVLAGYPVVDFKVTLYDGSYHDVDSSEMAFKIAGSMAFKDAAREASPVLLEPIMKVEVEVPEDYMGDVIGDLNRRRGQINSMGDRSGIKVINAFVPLAEMFGYSTDLRSATQGRGTYTMEFSHYGEVPGNISKEIIEKRKG.

The 276-residue stretch at 8-283 folds into the tr-type G domain; the sequence is NRIRNIGIAA…AVIDYLPAPT (276 aa). GTP is bound by residues 17 to 24, 81 to 85, and 135 to 138; these read AHIDAGKT, DTPGH, and NKMD.

The protein belongs to the TRAFAC class translation factor GTPase superfamily. Classic translation factor GTPase family. EF-G/EF-2 subfamily.

Its subcellular location is the cytoplasm. Catalyzes the GTP-dependent ribosomal translocation step during translation elongation. During this step, the ribosome changes from the pre-translocational (PRE) to the post-translocational (POST) state as the newly formed A-site-bound peptidyl-tRNA and P-site-bound deacylated tRNA move to the P and E sites, respectively. Catalyzes the coordinated movement of the two tRNA molecules, the mRNA and conformational changes in the ribosome. This chain is Elongation factor G, found in Wolinella succinogenes (strain ATCC 29543 / DSM 1740 / CCUG 13145 / JCM 31913 / LMG 7466 / NCTC 11488 / FDC 602W) (Vibrio succinogenes).